We begin with the raw amino-acid sequence, 157 residues long: 2-C-methyl-D-erythritol 2,4-cyclodiphosphate synthase (157 aa).

Residues Asp-9 and His-11 each coordinate a divalent metal cation. 4-CDP-2-C-methyl-D-erythritol 2-phosphate is bound by residues 9 to 11 (DVH) and 35 to 36 (HS). His-43 contributes to the a divalent metal cation binding site. Residues 57–59 (DIG), Phe-140, and Arg-143 each bind 4-CDP-2-C-methyl-D-erythritol 2-phosphate.

This sequence belongs to the IspF family. In terms of assembly, homotrimer. The cofactor is a divalent metal cation.

It catalyses the reaction 4-CDP-2-C-methyl-D-erythritol 2-phosphate = 2-C-methyl-D-erythritol 2,4-cyclic diphosphate + CMP. The protein operates within isoprenoid biosynthesis; isopentenyl diphosphate biosynthesis via DXP pathway; isopentenyl diphosphate from 1-deoxy-D-xylulose 5-phosphate: step 4/6. Functionally, involved in the biosynthesis of isopentenyl diphosphate (IPP) and dimethylallyl diphosphate (DMAPP), two major building blocks of isoprenoid compounds. Catalyzes the conversion of 4-diphosphocytidyl-2-C-methyl-D-erythritol 2-phosphate (CDP-ME2P) to 2-C-methyl-D-erythritol 2,4-cyclodiphosphate (ME-CPP) with a corresponding release of cytidine 5-monophosphate (CMP). This Caldicellulosiruptor bescii (strain ATCC BAA-1888 / DSM 6725 / KCTC 15123 / Z-1320) (Anaerocellum thermophilum) protein is 2-C-methyl-D-erythritol 2,4-cyclodiphosphate synthase.